Reading from the N-terminus, the 320-residue chain is ATP-dependent 6-phosphofructokinase (320 aa).

Residue Gly12 participates in ATP binding. ADP is bound by residues 22-26 and 55-60; these read RGVVR and RYSVSD. Residues 73–74 and 103–106 each bind ATP; these read RF and GDGS. Asp104 provides a ligand contact to Mg(2+). 126-128 is a binding site for substrate; it reads TID. Asp128 (proton acceptor) is an active-site residue. Arg155 is an ADP binding site. Substrate-binding positions include Arg163 and 170 to 172; that span reads MGR. Residues 186–188, Lys212, and 214–216 each bind ADP; these read GCE and KKH. Residues Glu223, Arg244, and 250–253 each bind substrate; that span reads HIQR.

It belongs to the phosphofructokinase type A (PFKA) family. ATP-dependent PFK group I subfamily. Prokaryotic clade 'B1' sub-subfamily. Homotetramer. Requires Mg(2+) as cofactor.

Its subcellular location is the cytoplasm. It catalyses the reaction beta-D-fructose 6-phosphate + ATP = beta-D-fructose 1,6-bisphosphate + ADP + H(+). Its pathway is carbohydrate degradation; glycolysis; D-glyceraldehyde 3-phosphate and glycerone phosphate from D-glucose: step 3/4. With respect to regulation, allosterically activated by ADP and other diphosphonucleosides, and allosterically inhibited by phosphoenolpyruvate. In terms of biological role, catalyzes the phosphorylation of D-fructose 6-phosphate to fructose 1,6-bisphosphate by ATP, the first committing step of glycolysis. The protein is ATP-dependent 6-phosphofructokinase of Klebsiella pneumoniae (strain 342).